Reading from the N-terminus, the 161-residue chain is Putative TRAP transporter small permease protein HI_1030 (161 aa).

Helical transmembrane passes span 13–33 (LEIL…LNVV), 51–71 (YLFI…NQHV), 86–106 (AILK…IIEG), and 135–155 (IAGI…IFFI).

This sequence belongs to the TRAP transporter small permease family.

It localises to the cell inner membrane. This chain is Putative TRAP transporter small permease protein HI_1030, found in Haemophilus influenzae (strain ATCC 51907 / DSM 11121 / KW20 / Rd).